Consider the following 626-residue polypeptide: tRNA uridine 5-carboxymethylaminomethyl modification enzyme MnmG (626 aa).

13–18 (GGGHAG) provides a ligand contact to FAD. Residue 273–287 (GPRYCPSIEDKIHRF) participates in NAD(+) binding.

This sequence belongs to the MnmG family. As to quaternary structure, homodimer. Heterotetramer of two MnmE and two MnmG subunits. FAD serves as cofactor.

It localises to the cytoplasm. NAD-binding protein involved in the addition of a carboxymethylaminomethyl (cmnm) group at the wobble position (U34) of certain tRNAs, forming tRNA-cmnm(5)s(2)U34. The protein is tRNA uridine 5-carboxymethylaminomethyl modification enzyme MnmG of Acinetobacter baylyi (strain ATCC 33305 / BD413 / ADP1).